Consider the following 352-residue polypeptide: Cellular tumor antigen p53 (352 aa).

A transcription activation (acidic) region spans residues 1–48; that stretch reads MDPVPDLPESQGSFQELWETVSYPPLETLSLPTVNEPTGSWVATGDMF. A DNA-binding region spans residues 87–273; the sequence is DYPGSYELEL…KTEEESRQKT (187 aa). 4 residues coordinate Zn(2+): C161, H164, C220, and C224. Positions 254–261 are interaction with DNA; it reads RICACPGR. Basic and acidic residues predominate over residues 262-271; it reads DRKTEEESRQ. A disordered region spans residues 262-303; it reads DRKTEEESRQKTQPKKRKVTPNTSSSKRKKSHSSGEEEDNRE. The Bipartite nuclear localization signal motif lies at 276–291; it reads KKRKVTPNTSSSKRKK. Residues 302–331 are oligomerization; the sequence is REVFHFEVYGRERYEFLKKINDGLELLEKE. Positions 316–327 match the Nuclear export signal motif; the sequence is EFLKKINDGLEL. Positions 330 to 352 are disordered; that stretch reads KESKSKNKDSGMVPSSGKKLKSN. The tract at residues 334–350 is basic (repression of DNA-binding); sequence SKNKDSGMVPSSGKKLK. Position 351 is a phosphoserine (S351).

It belongs to the p53 family. Binds DNA as a homotetramer. It depends on Zn(2+) as a cofactor.

The protein localises to the cytoplasm. The protein resides in the nucleus. In terms of biological role, multifunctional transcription factor that induces cell cycle arrest, DNA repair or apoptosis upon binding to its target DNA sequence. Acts as a tumor suppressor in many tumor types; induces growth arrest or apoptosis depending on the physiological circumstances and cell type. Negatively regulates cell division by controlling expression of a set of genes required for this process. One of the activated genes is an inhibitor of cyclin-dependent kinases. Apoptosis induction seems to be mediated either by stimulation of BAX and FAS antigen expression, or by repression of Bcl-2 expression. The polypeptide is Cellular tumor antigen p53 (tp53) (Oryzias latipes (Japanese rice fish)).